The following is a 195-amino-acid chain: Penicillin-binding protein activator LpoB (195 aa).

The N-terminal stretch at 1 to 16 is a signal peptide; sequence MKKYLFVALAALVLTG. Cys-17 carries N-palmitoyl cysteine lipidation. The S-diacylglycerol cysteine moiety is linked to residue Cys-17. The tract at residues 19 to 55 is disordered; the sequence is SRPPEPEQPQPPVTVEPVTPPVVEEPQPPVTEPVPQP. Composition is skewed to pro residues over residues 24–38 and 44–55; these read PEQP…PVTP and PQPPVTEPVPQP.

This sequence belongs to the LpoB family. Interacts with PBP1b.

It localises to the cell outer membrane. Functionally, regulator of peptidoglycan synthesis that is essential for the function of penicillin-binding protein 1B (PBP1b). The protein is Penicillin-binding protein activator LpoB of Serratia proteamaculans (strain 568).